We begin with the raw amino-acid sequence, 191 residues long: Photosystem I assembly protein Ycf4 (191 aa).

The next 2 membrane-spanning stretches (helical) occupy residues 34 to 54 (VASM…SSYF) and 68 to 88 (IFVP…LLAI).

The protein belongs to the Ycf4 family.

The protein localises to the cellular thylakoid membrane. Its function is as follows. Seems to be required for the assembly of the photosystem I complex. This Prochlorococcus marinus (strain NATL1A) protein is Photosystem I assembly protein Ycf4.